The sequence spans 94 residues: uncharacterized protein (94 aa).

As to expression, specifically expressed in retina and retinal pigment epithelium.

This is an uncharacterized protein from Homo sapiens (Human).